The primary structure comprises 511 residues: Maturase K (511 aa).

Belongs to the intron maturase 2 family. MatK subfamily.

The protein resides in the plastid. Its subcellular location is the chloroplast. Usually encoded in the trnK tRNA gene intron. Probably assists in splicing its own and other chloroplast group II introns. The sequence is that of Maturase K from Diplacus aurantiacus (Orange bush monkey flower).